The chain runs to 158 residues: Cell number regulator 11 (158 aa).

The next 2 membrane-spanning stretches (helical) occupy residues 49–67 and 78–94; these read FGDLHTCCLTLWCPCVTFG and TCCMSGTLYYLLSTIGW.

This sequence belongs to the cornifelin family.

Its subcellular location is the membrane. In Zea mays (Maize), this protein is Cell number regulator 11 (CNR11).